A 187-amino-acid polypeptide reads, in one-letter code: Elongation factor P (187 aa).

This sequence belongs to the elongation factor P family.

Its subcellular location is the cytoplasm. It participates in protein biosynthesis; polypeptide chain elongation. Its function is as follows. Involved in peptide bond synthesis. Stimulates efficient translation and peptide-bond synthesis on native or reconstituted 70S ribosomes in vitro. Probably functions indirectly by altering the affinity of the ribosome for aminoacyl-tRNA, thus increasing their reactivity as acceptors for peptidyl transferase. The polypeptide is Elongation factor P (Flavobacterium psychrophilum (strain ATCC 49511 / DSM 21280 / CIP 103535 / JIP02/86)).